The sequence spans 691 residues: Histone-lysine N-methyltransferase Set8 (691 aa).

Disordered regions lie at residues 1 to 22 (MIMV…AAAA), 211 to 234 (RSGL…SATT), 345 to 381 (PAAG…GDGG), 422 to 450 (SRRR…QPTN), and 484 to 516 (APAK…ATNG). The segment covering 220–232 (SSHSSSSSGGASA) has biased composition (low complexity). The span at 431 to 446 (PQAPYQPQQPQPPPGT) shows a compositional bias: pro residues. Residues 484–503 (APAKPRAALTKGSKTKTGSK) are compositionally biased toward low complexity. An SET domain is found at 555–676 (EGLQVRNFMG…PGEELTYDYG (122 aa)). S-adenosyl-L-methionine contacts are provided by residues 565-567 (KGR), Y610, and 637-638 (NH).

It belongs to the class V-like SAM-binding methyltransferase superfamily. Histone-lysine methyltransferase family. PR/SET subfamily.

The protein localises to the nucleus. Its subcellular location is the chromosome. The catalysed reaction is L-lysyl(20)-[histone H4] + S-adenosyl-L-methionine = N(6)-methyl-L-lysyl(20)-[histone H4] + S-adenosyl-L-homocysteine + H(+). Histone methyltransferase that specifically monomethylates 'Lys-20' of histone H4. H4 'Lys-20' monomethylation is enriched during mitosis and represents a specific tag for epigenetic transcriptional repression. Mainly functions in euchromatin regions, thereby playing a central role in the silencing of euchromatic genes. Required for cell proliferation, possibly by contributing to the maintenance of proper higher-order structure of DNA and chromosome condensation during mitosis. The protein is Histone-lysine N-methyltransferase Set8 of Drosophila pseudoobscura pseudoobscura (Fruit fly).